The sequence spans 401 residues: Probable N-acetyl-gamma-glutamyl-phosphate reductase, chloroplastic (401 aa).

A chloroplast-targeting transit peptide spans 1-48; it reads MSTASAFSSIQGCWFKGERKIRVADKRAKRLTLGSHVASPSSMSFRVS. Residue Cys-205 is part of the active site.

It belongs to the NAGSA dehydrogenase family. Type 1 subfamily. As to quaternary structure, homotetramer.

The protein localises to the plastid. It is found in the chloroplast. It carries out the reaction N-acetyl-L-glutamate 5-semialdehyde + phosphate + NADP(+) = N-acetyl-L-glutamyl 5-phosphate + NADPH + H(+). It participates in amino-acid biosynthesis; L-arginine biosynthesis; N(2)-acetyl-L-ornithine from L-glutamate: step 3/4. The polypeptide is Probable N-acetyl-gamma-glutamyl-phosphate reductase, chloroplastic (Arabidopsis thaliana (Mouse-ear cress)).